Here is a 174-residue protein sequence, read N- to C-terminus: MEKTEEEVEMKELVGLVRILVKRGIDLARRDALSSDPFVVITMGPQKLKSFTVKNNCNPEWNEELTLAIEDPNEPVKLMVYDKDTFTADDKMGDAQIDMKPFLDVHKLGLKELPHGKELKRIVPTRDNCLSEDSIIVSDNGKIVQDMILLLKNVECGKVEIQLEWLKNPGGSGL.

The region spanning M1–H115 is the C2 domain. The Ca(2+) site is built by R30, D31, D36, D82, K83, D84, and D90.

The protein belongs to the plant CAR protein family. As to quaternary structure, binds to PYR/PYL/RCAR abscisic acid intracellular receptors in an ABA-independent manner, both at the plasma membrane and in the nucleus. Subunit of a complex made of CAR6, PHOT1 and RPT3/NPH3. Interacts directly with RPT3/NPH3.

It is found in the cell membrane. It localises to the nucleus. Its function is as follows. Stimulates the GTPase/ATPase activities of Obg-like ATPases. Mediates the transient calcium-dependent interaction of PYR/PYL/RCAR abscisic acid (ABA) receptors with the plasma membrane and thus regulates ABA sensitivity. Prevents hypocotyl bending as well as gravitropic response under blue light conditions. The polypeptide is Protein C2-DOMAIN ABA-RELATED 6 (Arabidopsis thaliana (Mouse-ear cress)).